We begin with the raw amino-acid sequence, 736 residues long: Centrosomal protein kizuna (736 aa).

Residues 10-35 (HRAMKLQRNLRHCEGKRLELERELFQ) are a coiled coil. Polar residues predominate over residues 192 to 208 (NTSFQLSQKMPVTSVAS). 4 disordered regions span residues 192–238 (NTSF…SAQL), 279–305 (SFTH…DKHS), 323–348 (EDKQ…SYPP), and 642–690 (TVEE…NMST). Over residues 210-219 (EDGRTHRAQI) the composition is skewed to basic and acidic residues. Positions 328–339 (LDSSSDLTVSIS) are enriched in polar residues. The span at 658–668 (SETSFSSSEKS) shows a compositional bias: low complexity. The segment covering 678–690 (IQPNYMKSNNMST) has biased composition (polar residues).

It belongs to the kizuna family.

It localises to the cytoplasm. It is found in the cytoskeleton. Its subcellular location is the microtubule organizing center. The protein localises to the centrosome. The protein resides in the cilium basal body. Centrosomal protein required for establishing a robust mitotic centrosome architecture that can endure the forces that converge on the centrosomes during spindle formation. Required for stabilizing the expanded pericentriolar material around the centriole. The chain is Centrosomal protein kizuna (kiz) from Xenopus laevis (African clawed frog).